The following is a 254-amino-acid chain: Alcohol dehydrogenase 2 (254 aa).

10–33 (FVAGLGGIGFDTSREIVKRGPKNL) is a binding site for NAD(+). Substrate is bound at residue Ser138. The Proton acceptor role is filled by Tyr151.

Belongs to the short-chain dehydrogenases/reductases (SDR) family. In terms of assembly, homodimer.

It carries out the reaction a primary alcohol + NAD(+) = an aldehyde + NADH + H(+). The enzyme catalyses a secondary alcohol + NAD(+) = a ketone + NADH + H(+). This chain is Alcohol dehydrogenase 2 (Adh2), found in Drosophila mojavensis (Fruit fly).